We begin with the raw amino-acid sequence, 111 residues long: Large ribosomal subunit protein uL24 (111 aa).

It belongs to the universal ribosomal protein uL24 family. In terms of assembly, part of the 50S ribosomal subunit.

Its function is as follows. One of two assembly initiator proteins, it binds directly to the 5'-end of the 23S rRNA, where it nucleates assembly of the 50S subunit. In terms of biological role, one of the proteins that surrounds the polypeptide exit tunnel on the outside of the subunit. The chain is Large ribosomal subunit protein uL24 from Cytophaga hutchinsonii (strain ATCC 33406 / DSM 1761 / CIP 103989 / NBRC 15051 / NCIMB 9469 / D465).